A 520-amino-acid polypeptide reads, in one-letter code: MMLRGNLKQVRIEKNPARLRALESAAGEGDPAALALALPGEPPVPAAPAGEDRPADEGGFTIDIKSFLKPGEKTYTQRCRLFVGNLPTDITEDDFKRLFERYGEPSEVFINRDRGFGFIRLESRTLAEIAKAELDGTILKSRPLRIRFATHGAALTVKNLSPVVSNELLEQAFSQFGPVEKAVVVVDDRGRATGKGFVEFAAKPPARKALERCGDGAFLLTTTPRPVIVEPMEQFDDEDGLPEKLMQKTQQYHKEREQPPRFAQPGTFEFEYASRWKALDEMEKQQREQVDRNIREAKEKLEAEMEAARHEHQLMLMRQDLMRRQEELRRLEELRNQELQKRKQIQLRHEEEHRRREEEMIRHREQEELRRQQEGFKPNYMENREQEMRMGDMGPRGAINMGDAFSPAPAGNQGPPAMMGMNMNNRGTIPGPPMGPGPAMGPEGAANMGTPMMPDNGAVHNDRFPQGPPSQMGSPMGSRTGSETPQAPMSGVGPVSGGPGGFGRGSQGANFEGPNKRRRY.

An N-acetylmethionine modification is found at methionine 1. 2 consecutive RRM domains span residues 79–151 (CRLF…FATH) and 153–234 (AALT…PMEQ). The segment at 122–355 (ESRTLAEIAK…QLRHEEEHRR (234 aa)) is sufficient for paraspeckles localization. The sufficient for perinucleolar caps localization and interaction with NONO stretch occupies residues 228–355 (IVEPMEQFDD…QLRHEEEHRR (128 aa)). Residues 280 to 374 (DEMEKQQREQ…EQEELRRQQE (95 aa)) are a coiled coil. A phosphoserine mark is found at serine 406, serine 470, and serine 474. The disordered stretch occupies residues 457 to 520 (GAVHNDRFPQ…FEGPNKRRRY (64 aa)). Positions 469-487 (PSQMGSPMGSRTGSETPQA) are enriched in polar residues. Over residues 494-506 (PVSGGPGGFGRGS) the composition is skewed to gly residues. Arginine 504 carries the omega-N-methylarginine modification. Position 506 is a phosphoserine (serine 506).

It belongs to the PSPC family. As to quaternary structure, forms heterodimers with NONO; this involves formation of a coiled coil domain by helices from both proteins. Found in a RNP complex with CAT2 transcribed nuclear RNA (CTN-RNA). Interaction with NONO is required for its targeting to paraspeckles and perinucleolar caps. Interacts with SFPQ. Part of the HDP-RNP complex composed of at least HEXIM1, PRKDC, XRCC5, XRCC6, paraspeckle proteins (SFPQ, NONO, PSPC1, RBM14, and MATR3) and NEAT1 RNA. Interacts with ALKBH5 (when acetylated); interaction with acetylated ALKBH5 facilitates recognition of N(6)-methyladenosine (m6A) RNAs.

The protein localises to the nucleus speckle. Its subcellular location is the nucleus. It localises to the nucleolus. The protein resides in the nucleus matrix. It is found in the cytoplasm. Its function is as follows. RNA-binding protein required for the formation of nuclear paraspeckles. Binds to poly(A), poly(G) and poly(U) RNA homopolymers. Regulates, cooperatively with NONO and SFPQ, androgen receptor-mediated gene transcription activity in Sertoli cell line. Regulates the circadian clock by repressing the transcriptional activator activity of the CLOCK-BMAL1 heterodimer. Plays a role in the regulation of DNA virus-mediated innate immune response by assembling into the HDP-RNP complex, a complex that serves as a platform for IRF3 phosphorylation and subsequent innate immune response activation through the cGAS-STING pathway. The sequence is that of Paraspeckle component 1 (PSPC1) from Bos taurus (Bovine).